Consider the following 912-residue polypeptide: DNA (cytosine-5)-methyltransferase 3A (912 aa).

Disordered regions lie at residues 1–178 and 221–286; these read MPAM…GWES and IAGM…EYED. Residues 17-40 are compositionally biased toward basic and acidic residues; that stretch reads AEREEDRKDGEEQEEPRGKEERQE. Basic residues predominate over residues 47–57; the sequence is KVGRPGRKRKH. Residues 74 to 83 show a composition bias toward polar residues; it reads KSPSMAQDSG. S105 carries the phosphoserine modification. The segment covering 113–128 has biased composition (low complexity); the sequence is GAPAEGEGAAETLPEA. A Phosphothreonine modification is found at T124. The segment covering 149-167 has biased composition (basic and acidic residues); it reads AGKEQKETNIESMKMEGSR. Residue K162 forms a Glycyl lysine isopeptide (Lys-Gly) (interchain with G-Cter in SUMO2) linkage. R171 bears the Omega-N-methylarginine mark. The interval 199–403 is interaction with DNMT1 and DNMT3B; it reads SKRKRDEWLA…DTAKAVEVQN (205 aa). S243 and S255 each carry phosphoserine. Residues 246-260 show a composition bias toward polar residues; that stretch reads AVQQPTDPASPTVAT. T261 is modified (phosphothreonine). A Phosphoserine modification is found at S267. Residues 269 to 279 show a composition bias toward basic and acidic residues; that stretch reads AGDKNATKAGD. Residues 292–350 form the PWWP domain; it reads IGELVWGKLRGFSWWPGRIVSWWMTGRSRAAEGTRWVMWFGDGKFSVVCVEKLMPLSSF. S390 and S393 each carry phosphoserine. Residues 447–466 form a disordered region; sequence AYAPPPPAKKPRKSTAEKPK. Positions 482–614 constitute an ADD domain; sequence EVRQKCRNIE…LQMFFANNHD (133 aa). The segment at 493–523 adopts a GATA-type; atypical zinc-finger fold; the sequence is ICISCGSLNVTLEHPLFVGGMCQNCKNCFLE. Residues 494–586 are interaction with the PRC2/EED-EZH2 complex; sequence CISCGSLNVT…KEDPWNCYMC (93 aa). A PHD-type; atypical zinc finger spans residues 534–590; it reads QSYCTICCGGREVLMCGNNNCCRCFCVECVDLLVGPGAAQAAIKEDPWNCYMCGHKG. Residues 634 to 912 enclose the SAM-dependent MTase C5-type domain; it reads IRVLSLFDGI…APLKEYFACV (279 aa). S-adenosyl-L-methionine-binding positions include 641–645, E664, and 686–688; these read DGIAT and DVR. C710 is a catalytic residue. C710 carries the post-translational modification S-methylcysteine; by autocatalysis. S-adenosyl-L-methionine is bound at residue 891–893; it reads RSW.

Belongs to the class I-like SAM-binding methyltransferase superfamily. C5-methyltransferase family. In terms of assembly, heterotetramer composed of 1 DNMT3A homodimer and 2 DNMT3L subunits (DNMT3L-DNMT3A-DNMT3A-DNMT3L). Interacts with UBC9, PIAS1 and PIAS2. Binds the ZBTB18 transcriptional repressor. Interacts with SETDB1. Associates with HDAC1 through its ADD domain. Interacts with UHRF1. Interacts with DNMT1 and DNMT3B. Interacts with the PRC2/EED-EZH2 complex. Interacts with MPHOSPH8. Interacts with histone H3 that is not methylated at 'Lys-4' (H3K4). Interacts with SPOCD1. Interacts with ZNF263; recruited to the SIX3 promoter along with other proteins involved in chromatin modification and transcriptional corepression where it contributes to transcriptional repression. Sumoylated; sumoylation disrupts the ability to interact with histone deacetylases (HDAC1 and HDAC2) and repress transcription. Post-translationally, auto-methylated at Cys-710: auto-methylation takes place in absence of DNA substrate and inactivates the DNA methyltransferase activity. Inactivation by auto-methylation may be used to inactivate unused DNA methyltransferases in the cell. In terms of tissue distribution, highly expressed in fetal tissues, skeletal muscle, heart, peripheral blood mononuclear cells, kidney, and at lower levels in placenta, brain, liver, colon, spleen, small intestine and lung.

It localises to the nucleus. Its subcellular location is the chromosome. The protein resides in the cytoplasm. It catalyses the reaction a 2'-deoxycytidine in DNA + S-adenosyl-L-methionine = a 5-methyl-2'-deoxycytidine in DNA + S-adenosyl-L-homocysteine + H(+). The enzyme catalyses L-cysteinyl-[protein] + S-adenosyl-L-methionine = S-methyl-L-cysteinyl-[protein] + S-adenosyl-L-homocysteine + H(+). Its activity is regulated as follows. Activated by binding to the regulatory factor DNMT3L. Auto-methylation at Cys-710 in absence of DNA inactivates the DNA methyltransferase activity. Its function is as follows. Required for genome-wide de novo methylation and is essential for the establishment of DNA methylation patterns during development. DNA methylation is coordinated with methylation of histones. It modifies DNA in a non-processive manner and also methylates non-CpG sites. May preferentially methylate DNA linker between 2 nucleosomal cores and is inhibited by histone H1. Plays a role in paternal and maternal imprinting. Required for methylation of most imprinted loci in germ cells. Acts as a transcriptional corepressor for ZBTB18. Recruited to trimethylated 'Lys-36' of histone H3 (H3K36me3) sites. Can actively repress transcription through the recruitment of HDAC activity. Also has weak auto-methylation activity on Cys-710 in absence of DNA. In Homo sapiens (Human), this protein is DNA (cytosine-5)-methyltransferase 3A (DNMT3A).